The sequence spans 257 residues: 4-hydroxy-tetrahydrodipicolinate reductase (257 aa).

Residues 11 to 16 (GANGRM) and glutamate 37 each bind NAD(+). Arginine 38 contributes to the NADP(+) binding site. Residues 86–88 (GST) and 110–113 (SGNY) contribute to the NAD(+) site. Histidine 144 serves as the catalytic Proton donor/acceptor. (S)-2,3,4,5-tetrahydrodipicolinate is bound at residue histidine 145. Catalysis depends on lysine 148, which acts as the Proton donor. Residue 154-155 (GT) coordinates (S)-2,3,4,5-tetrahydrodipicolinate.

The protein belongs to the DapB family.

The protein localises to the cytoplasm. The enzyme catalyses (S)-2,3,4,5-tetrahydrodipicolinate + NAD(+) + H2O = (2S,4S)-4-hydroxy-2,3,4,5-tetrahydrodipicolinate + NADH + H(+). It carries out the reaction (S)-2,3,4,5-tetrahydrodipicolinate + NADP(+) + H2O = (2S,4S)-4-hydroxy-2,3,4,5-tetrahydrodipicolinate + NADPH + H(+). It functions in the pathway amino-acid biosynthesis; L-lysine biosynthesis via DAP pathway; (S)-tetrahydrodipicolinate from L-aspartate: step 4/4. Catalyzes the conversion of 4-hydroxy-tetrahydrodipicolinate (HTPA) to tetrahydrodipicolinate. This Caulobacter vibrioides (strain ATCC 19089 / CIP 103742 / CB 15) (Caulobacter crescentus) protein is 4-hydroxy-tetrahydrodipicolinate reductase.